The primary structure comprises 383 residues: Ovalbumin (383 aa).

The residue at position 2 (G2) is an N-acetylglycine. Residues 22-48 (HHANDNMLYSPFAILSTLAMVFLGAKD) constitute a signal peptide (not cleaved). S69 carries the phosphoserine modification. C74 and C121 form a disulfide bridge. Residues N293 and N312 are each glycosylated (N-linked (GlcNAc...) asparagine). S345 is subject to Phosphoserine.

The protein belongs to the serpin family. Ov-serpin subfamily. Post-translationally, the signal sequence is not cleaved. The functional signal for membrane translocation of ovalbumin becomes accessible when the nascent chain is 50 to 60 residues long. The hydrophobic sequence which lies between residues 27 and 43 folds back on the preceding residues to form an amphipathic hairpin structure which is the signal element recognized by the membrane. As to expression, major protein of egg white.

Its subcellular location is the secreted. Storage protein of egg white. Lack protease inhibitory activity. The polypeptide is Ovalbumin (SERPINB14) (Coturnix japonica (Japanese quail)).